A 389-amino-acid polypeptide reads, in one-letter code: Flagellar P-ring protein (389 aa).

The N-terminal stretch at 1 to 33 (MRPLVAARRRAAACCALAACMLALAFAPAAARA) is a signal peptide.

The protein belongs to the FlgI family. In terms of assembly, the basal body constitutes a major portion of the flagellar organelle and consists of four rings (L,P,S, and M) mounted on a central rod.

The protein localises to the periplasm. It is found in the bacterial flagellum basal body. Its function is as follows. Assembles around the rod to form the L-ring and probably protects the motor/basal body from shearing forces during rotation. In Burkholderia mallei (strain ATCC 23344), this protein is Flagellar P-ring protein.